The chain runs to 198 residues: MNVVVVDNYDSFTYNLVEYLSAQPRDDHAPDVTVLKNTASLAAVRAADPDAVVISPGPGHPDTPRDVGVTTDVLRAVSPRVPTLGVCLGMEAAVHEYGGTVGRAAEPMHGKTTPVSHDETGIFADIQQDFPAARYHSLVCTSIPSCFAVTATTRDGSLPMAIRHRDHPLACVQFHPESVLTGVGHDVIGNFLDAAAAH.

In terms of domain architecture, Glutamine amidotransferase type-1 spans 2-198; it reads NVVVVDNYDS…GNFLDAAAAH (197 aa). An L-glutamine-binding site is contributed by 57-59; the sequence is GPG. Residue cysteine 87 is the Nucleophile; for GATase activity of the active site. Position 137–138 (137–138) interacts with L-glutamine; the sequence is SL. Residues histidine 175 and glutamate 177 each act as for GATase activity in the active site.

In terms of assembly, heterotetramer consisting of two non-identical subunits: a beta subunit (TrpG) and a large alpha subunit (TrpE).

The catalysed reaction is chorismate + L-glutamine = anthranilate + pyruvate + L-glutamate + H(+). Its pathway is amino-acid biosynthesis; L-tryptophan biosynthesis; L-tryptophan from chorismate: step 1/5. In terms of biological role, part of a heterotetrameric complex that catalyzes the two-step biosynthesis of anthranilate, an intermediate in the biosynthesis of L-tryptophan. In the first step, the glutamine-binding beta subunit (TrpG) of anthranilate synthase (AS) provides the glutamine amidotransferase activity which generates ammonia as a substrate that, along with chorismate, is used in the second step, catalyzed by the large alpha subunit of AS (TrpE) to produce anthranilate. In the absence of TrpG, TrpE can synthesize anthranilate directly from chorismate and high concentrations of ammonia. This Halobacterium salinarum (strain ATCC 700922 / JCM 11081 / NRC-1) (Halobacterium halobium) protein is Anthranilate synthase component 2 (trpG).